A 194-amino-acid chain; its full sequence is Imidazoleglycerol-phosphate dehydratase (194 aa).

It belongs to the imidazoleglycerol-phosphate dehydratase family.

The protein localises to the cytoplasm. It catalyses the reaction D-erythro-1-(imidazol-4-yl)glycerol 3-phosphate = 3-(imidazol-4-yl)-2-oxopropyl phosphate + H2O. The protein operates within amino-acid biosynthesis; L-histidine biosynthesis; L-histidine from 5-phospho-alpha-D-ribose 1-diphosphate: step 6/9. The sequence is that of Imidazoleglycerol-phosphate dehydratase from Lacticaseibacillus paracasei (strain ATCC 334 / BCRC 17002 / CCUG 31169 / CIP 107868 / KCTC 3260 / NRRL B-441) (Lactobacillus paracasei).